A 159-amino-acid chain; its full sequence is 6,7-dimethyl-8-ribityllumazine synthase (159 aa).

5-amino-6-(D-ribitylamino)uracil contacts are provided by residues phenylalanine 22, 57–59 (AVE), and 81–83 (AVI). 86–87 (GT) lines the (2S)-2-hydroxy-3-oxobutyl phosphate pocket. The Proton donor role is filled by histidine 89. Position 114 (phenylalanine 114) interacts with 5-amino-6-(D-ribitylamino)uracil. Position 128 (arginine 128) interacts with (2S)-2-hydroxy-3-oxobutyl phosphate.

Belongs to the DMRL synthase family. As to quaternary structure, forms an icosahedral capsid composed of 60 subunits, arranged as a dodecamer of pentamers.

It carries out the reaction (2S)-2-hydroxy-3-oxobutyl phosphate + 5-amino-6-(D-ribitylamino)uracil = 6,7-dimethyl-8-(1-D-ribityl)lumazine + phosphate + 2 H2O + H(+). It participates in cofactor biosynthesis; riboflavin biosynthesis; riboflavin from 2-hydroxy-3-oxobutyl phosphate and 5-amino-6-(D-ribitylamino)uracil: step 1/2. In terms of biological role, catalyzes the formation of 6,7-dimethyl-8-ribityllumazine by condensation of 5-amino-6-(D-ribitylamino)uracil with 3,4-dihydroxy-2-butanone 4-phosphate. This is the penultimate step in the biosynthesis of riboflavin. The chain is 6,7-dimethyl-8-ribityllumazine synthase from Shewanella baltica (strain OS155 / ATCC BAA-1091).